A 245-amino-acid polypeptide reads, in one-letter code: OVARIAN TUMOR DOMAIN-containing deubiquitinating enzyme 11 (245 aa).

The segment at 1–37 (MDENHRNPFANASTSARASGSTSASSNSSFSSSVADT) is disordered. Over residues 10–35 (ANASTSARASGSTSASSNSSFSSSVA) the composition is skewed to low complexity. One can recognise an OTU domain in the interval 101 to 225 (LAELQMEGDG…EVHYNSLYAN (125 aa)). Asp-109 is a catalytic residue. Cys-112 functions as the Nucleophile in the catalytic mechanism. The active site involves His-218.

Belongs to the peptidase C85 family.

The catalysed reaction is Thiol-dependent hydrolysis of ester, thioester, amide, peptide and isopeptide bonds formed by the C-terminal Gly of ubiquitin (a 76-residue protein attached to proteins as an intracellular targeting signal).. Hydrolase that can remove conjugated ubiquitin from proteins in vitro and may therefore play an important regulatory role at the level of protein turnover by preventing degradation. Inactive cysteine protease. The protein is OVARIAN TUMOR DOMAIN-containing deubiquitinating enzyme 11 of Arabidopsis thaliana (Mouse-ear cress).